We begin with the raw amino-acid sequence, 245 residues long: tRNA (guanine-N(1)-)-methyltransferase (245 aa).

Residues Gly112 and 132-137 (IGDFVL) contribute to the S-adenosyl-L-methionine site.

It belongs to the RNA methyltransferase TrmD family. As to quaternary structure, homodimer.

Its subcellular location is the cytoplasm. It carries out the reaction guanosine(37) in tRNA + S-adenosyl-L-methionine = N(1)-methylguanosine(37) in tRNA + S-adenosyl-L-homocysteine + H(+). In terms of biological role, specifically methylates guanosine-37 in various tRNAs. This is tRNA (guanine-N(1)-)-methyltransferase from Geobacter metallireducens (strain ATCC 53774 / DSM 7210 / GS-15).